The chain runs to 232 residues: tRNA (guanine-N(1)-)-methyltransferase (232 aa).

Residues Gly-111 and Ile-131 to Leu-136 contribute to the S-adenosyl-L-methionine site.

It belongs to the RNA methyltransferase TrmD family. As to quaternary structure, homodimer.

The protein resides in the cytoplasm. The catalysed reaction is guanosine(37) in tRNA + S-adenosyl-L-methionine = N(1)-methylguanosine(37) in tRNA + S-adenosyl-L-homocysteine + H(+). Functionally, specifically methylates guanosine-37 in various tRNAs. This Bartonella quintana (strain Toulouse) (Rochalimaea quintana) protein is tRNA (guanine-N(1)-)-methyltransferase.